We begin with the raw amino-acid sequence, 395 residues long: Flap endonuclease 1 (395 aa).

Residues Met1–Ala108 are N-domain. Residue Asp34 participates in Mg(2+) binding. Residue Arg74 participates in DNA binding. Asp90 is a binding site for Mg(2+). The interval Glu116 to Arg136 is disordered. Positions Met126–Tyr257 are I-domain. Residues Glu162, Glu164, Asp183, and Asp185 each contribute to the Mg(2+) site. Glu162 serves as a coordination point for DNA. The DNA site is built by Gly235 and Asp237. Residue Asp237 coordinates Mg(2+). The interval Thr340–Phe348 is interaction with PCNA.

It belongs to the XPG/RAD2 endonuclease family. FEN1 subfamily. Interacts with PCNA. Three molecules of FEN1 bind to one PCNA trimer with each molecule binding to one PCNA monomer. PCNA stimulates the nuclease activity without altering cleavage specificity. The cofactor is Mg(2+). Phosphorylated. Phosphorylation upon DNA damage induces relocalization to the nuclear plasma.

Its subcellular location is the nucleus. The protein resides in the nucleolus. It is found in the nucleoplasm. The protein localises to the mitochondrion. Structure-specific nuclease with 5'-flap endonuclease and 5'-3' exonuclease activities involved in DNA replication and repair. During DNA replication, cleaves the 5'-overhanging flap structure that is generated by displacement synthesis when DNA polymerase encounters the 5'-end of a downstream Okazaki fragment. It enters the flap from the 5'-end and then tracks to cleave the flap base, leaving a nick for ligation. Also involved in the long patch base excision repair (LP-BER) pathway, by cleaving within the apurinic/apyrimidinic (AP) site-terminated flap. Acts as a genome stabilization factor that prevents flaps from equilibrating into structures that lead to duplications and deletions. Also possesses 5'-3' exonuclease activity on nicked or gapped double-stranded DNA, and exhibits RNase H activity. Also involved in replication and repair of rDNA and in repairing mitochondrial DNA. This Leishmania major protein is Flap endonuclease 1.